We begin with the raw amino-acid sequence, 314 residues long: MENNTEVSEFILLGLTNAPELQVPLFIMFTLIYLITLTGNLGMIILILLDSHLHTPMYFFLSNLSLAGIGYSSAVTPKVLTGLLIEDKAISYSACAAQMFFCAVFATVENYLLSSMAYDRYAAVCNPLHYTTTMTTRVCACLAIGCYVIGFLNASIQIGDTFRLSFCMSNVIHHFFCDKPAVITLTCSEKHISELILVLISSFNVFFALLVTLISYLFILITILKRHTGKGYQKPLSTCGSHLIAIFLFYITVIIMYIRPSSSHSMDTDKIASVFYTMIIPMLSPIVYTLRNKDVKNAFMKVVEKAKYSLDSVF.

At 1 to 23 the chain is on the extracellular side; sequence MENNTEVSEFILLGLTNAPELQV. Residue asparagine 3 is glycosylated (N-linked (GlcNAc...) asparagine). Residues 24-44 traverse the membrane as a helical segment; sequence PLFIMFTLIYLITLTGNLGMI. Residues 45-52 are Cytoplasmic-facing; it reads ILILLDSH. Residues 53 to 73 traverse the membrane as a helical segment; it reads LHTPMYFFLSNLSLAGIGYSS. Residues 74–97 are Extracellular-facing; the sequence is AVTPKVLTGLLIEDKAISYSACAA. A disulfide bond links cysteine 95 and cysteine 187. The helical transmembrane segment at 98-118 threads the bilayer; it reads QMFFCAVFATVENYLLSSMAY. The Cytoplasmic portion of the chain corresponds to 119–137; that stretch reads DRYAAVCNPLHYTTTMTTR. Residues 138-158 form a helical membrane-spanning segment; sequence VCACLAIGCYVIGFLNASIQI. Residues 159-194 lie on the Extracellular side of the membrane; it reads GDTFRLSFCMSNVIHHFFCDKPAVITLTCSEKHISE. The helical transmembrane segment at 195-215 threads the bilayer; it reads LILVLISSFNVFFALLVTLIS. Residues 216-235 lie on the Cytoplasmic side of the membrane; the sequence is YLFILITILKRHTGKGYQKP. Residues 236–256 form a helical membrane-spanning segment; that stretch reads LSTCGSHLIAIFLFYITVIIM. Over 257–269 the chain is Extracellular; the sequence is YIRPSSSHSMDTD. A helical membrane pass occupies residues 270–290; the sequence is KIASVFYTMIIPMLSPIVYTL. Topologically, residues 291–314 are cytoplasmic; the sequence is RNKDVKNAFMKVVEKAKYSLDSVF.

The protein belongs to the G-protein coupled receptor 1 family.

It localises to the cell membrane. Odorant receptor. The sequence is that of Olfactory receptor 5B17 (OR5B17) from Homo sapiens (Human).